The sequence spans 466 residues: 23S rRNA (uracil(1939)-C(5))-methyltransferase RlmD (466 aa).

The region spanning 11–69 (KITDTKHKEIVINRLDHLGAGIGHLNNKSIFVDGLLPGEKALVQITDDKKQYARAKVIK) is the TRAM domain. [4Fe-4S] cluster is bound by residues Cys82, Cys88, Cys91, and Cys184. Positions 287, 316, 321, 337, 364, and 385 each coordinate S-adenosyl-L-methionine. The active-site Nucleophile is the Cys411.

This sequence belongs to the class I-like SAM-binding methyltransferase superfamily. RNA M5U methyltransferase family. RlmD subfamily.

The enzyme catalyses uridine(1939) in 23S rRNA + S-adenosyl-L-methionine = 5-methyluridine(1939) in 23S rRNA + S-adenosyl-L-homocysteine + H(+). Its function is as follows. Catalyzes the formation of 5-methyl-uridine at position 1939 (m5U1939) in 23S rRNA. This Photobacterium profundum (strain SS9) protein is 23S rRNA (uracil(1939)-C(5))-methyltransferase RlmD.